The sequence spans 369 residues: Chorismate synthase (369 aa).

Residues Arg-48 and Arg-54 each contribute to the NADP(+) site. FMN is bound by residues 125–127 (RSS), 238–239 (NA), Gly-278, 293–297 (KPTSS), and Arg-319.

The protein belongs to the chorismate synthase family. In terms of assembly, homotetramer. The cofactor is FMNH2.

It carries out the reaction 5-O-(1-carboxyvinyl)-3-phosphoshikimate = chorismate + phosphate. It participates in metabolic intermediate biosynthesis; chorismate biosynthesis; chorismate from D-erythrose 4-phosphate and phosphoenolpyruvate: step 7/7. Catalyzes the anti-1,4-elimination of the C-3 phosphate and the C-6 proR hydrogen from 5-enolpyruvylshikimate-3-phosphate (EPSP) to yield chorismate, which is the branch point compound that serves as the starting substrate for the three terminal pathways of aromatic amino acid biosynthesis. This reaction introduces a second double bond into the aromatic ring system. The sequence is that of Chorismate synthase from Cupriavidus metallidurans (strain ATCC 43123 / DSM 2839 / NBRC 102507 / CH34) (Ralstonia metallidurans).